We begin with the raw amino-acid sequence, 371 residues long: DNA replication and repair protein RecF (371 aa).

30 to 37 is a binding site for ATP; the sequence is GANAQGKT.

It belongs to the RecF family.

It is found in the cytoplasm. In terms of biological role, the RecF protein is involved in DNA metabolism; it is required for DNA replication and normal SOS inducibility. RecF binds preferentially to single-stranded, linear DNA. It also seems to bind ATP. In Lacticaseibacillus casei (strain BL23) (Lactobacillus casei), this protein is DNA replication and repair protein RecF.